The following is an 813-amino-acid chain: MAKKKSKSKSSSPKPKVSSTAAKPVEIDNQQNIENVQDSPSALQQQSATAEESENTATTATPSEGTTATTESSPVTTSNETDPIELSVLDNADHAIDSNSIKSTEAVLETLDSELNTIADTKTEPPTEQELNPTLAKYMRSCQEGNLTIVKELISSGQVLVNDTFSDEITGLHWACINNRLSLVKFLIANGANPNQLGGELKASPLHWACRNGLVYIVDYLMRNSDADPNLRDAQTYNALHLAVHSSNIMLVIYLLLSCCSTDSVKKVYIDEPDGSNRTALHWASYQNDIFTINALLRFGADVSKVDNSLFIPLHWAFMKGYKSVLKALVEAGSDIYFKNDQNKNSFDIAKDMNCSNTWEKVLIETGRDPKNNWAPLKPWVSAKLGKIITFLTPYFLLPLSFNVLSMGGDQGGFIIPKLILAIGILGGGIYLLNKLIISQYIFDDKKLAKSPILAGVFSATAFWSVLVWLYNILPTTFIHNFFANVIMAILIAIFTWSFFKAMFINPGFVPTPADNNVILSQVAQLIELGKFDTDHFCVNSFVRKPLRSRYSKHNKRLIARFDHSCPWVYNDIGVRNHKIFITFVYSLNMAIFVFLYLSLQYFDKVKDQYDSDDEGEGEGFVCSILGDDMCYGYKNHHFHFNVFMWDLFQCVWVSFLCIVQTFQILKGLTTWEFSSLNKQLQTNRFNHSTVPRDFEAGEGISLDQTQPSDGQHRHNHNEFQTCMNLLGIDQFILTLKMSLKSLFSNTRHGNNNTNYDPLTSLHIPTDHGIKQNWLDFWIIGEEKWRNVFYLPIDGENNLNGKVVDYYTLYSYH.

Positions 1-83 (MAKKKSKSKS…PVTTSNETDP (83 aa)) are disordered. Topologically, residues 1-387 (MAKKKSKSKS…KPWVSAKLGK (387 aa)) are cytoplasmic. Residues 9–24 (KSSSPKPKVSSTAAKP) show a composition bias toward low complexity. The span at 28 to 46 (DNQQNIENVQDSPSALQQQ) shows a compositional bias: polar residues. The span at 47-78 (SATAEESENTATTATPSEGTTATTESSPVTTS) shows a compositional bias: low complexity. ANK repeat units follow at residues 133-162 (PTLA…VLVN), 167-196 (DEIT…NPNQ), 201-231 (LKAS…DPNL), 235-264 (QTYN…STDS), 276-305 (SNRT…DVSK), and 309-338 (SLFI…DIYF). Residues 388-408 (IITFLTPYFLLPLSFNVLSMG) traverse the membrane as a helical segment. The Lumenal segment spans residues 409 to 412 (GDQG). The helical transmembrane segment at 413-433 (GFIIPKLILAIGILGGGIYLL) threads the bilayer. The Cytoplasmic portion of the chain corresponds to 434–452 (NKLIISQYIFDDKKLAKSP). The helical transmembrane segment at 453-473 (ILAGVFSATAFWSVLVWLYNI) threads the bilayer. The Lumenal portion of the chain corresponds to 474-485 (LPTTFIHNFFAN). Residues 486 to 506 (VIMAILIAIFTWSFFKAMFIN) form a helical membrane-spanning segment. Residues 507-579 (PGFVPTPADN…YNDIGVRNHK (73 aa)) lie on the Cytoplasmic side of the membrane. Positions 536-586 (HFCVNSFVRKPLRSRYSKHNKRLIARFDHSCPWVYNDIGVRNHKIFITFVY) constitute a DHHC domain. Cysteine 566 acts as the S-palmitoyl cysteine intermediate in catalysis. The helical transmembrane segment at 580–600 (IFITFVYSLNMAIFVFLYLSL) threads the bilayer. Topologically, residues 601–642 (QYFDKVKDQYDSDDEGEGEGFVCSILGDDMCYGYKNHHFHFN) are lumenal. Residues 643–663 (VFMWDLFQCVWVSFLCIVQTF) form a helical membrane-spanning segment. The Cytoplasmic portion of the chain corresponds to 664 to 813 (QILKGLTTWE…VDYYTLYSYH (150 aa)).

Belongs to the DHHC palmitoyltransferase family. AKR/ZDHHC17 subfamily.

The protein resides in the early endosome membrane. The protein localises to the golgi apparatus membrane. The catalysed reaction is L-cysteinyl-[protein] + hexadecanoyl-CoA = S-hexadecanoyl-L-cysteinyl-[protein] + CoA. In terms of biological role, palmitoyltransferase specific for casein kinase 1. The sequence is that of Palmitoyltransferase AKR1 (AKR1) from Candida albicans (strain SC5314 / ATCC MYA-2876) (Yeast).